Consider the following 104-residue polypeptide: uncharacterized protein (104 aa).

The first 23 residues, 1-23 (MDIHDYVELIALAFWVISVVSVG), serve as a signal peptide directing secretion.

This is an uncharacterized protein from Lactobacillus helveticus (Lactobacillus suntoryeus).